Reading from the N-terminus, the 299-residue chain is Oxygen-dependent coproporphyrinogen-III oxidase (299 aa).

S92 contributes to the substrate binding site. The Mn(2+) site is built by H96 and H106. The active-site Proton donor is the H106. 108 to 110 (NVR) provides a ligand contact to substrate. Residues H145 and H175 each contribute to the Mn(2+) site. The important for dimerization stretch occupies residues 240-275 (YVEFNLVWDRGTLFGLQTGGRTESILMSMPPLVRWE). Residue 258–260 (GGR) coordinates substrate.

It belongs to the aerobic coproporphyrinogen-III oxidase family. Homodimer. It depends on Mn(2+) as a cofactor.

It localises to the cytoplasm. It carries out the reaction coproporphyrinogen III + O2 + 2 H(+) = protoporphyrinogen IX + 2 CO2 + 2 H2O. It participates in porphyrin-containing compound metabolism; protoporphyrin-IX biosynthesis; protoporphyrinogen-IX from coproporphyrinogen-III (O2 route): step 1/1. Involved in the heme biosynthesis. Catalyzes the aerobic oxidative decarboxylation of propionate groups of rings A and B of coproporphyrinogen-III to yield the vinyl groups in protoporphyrinogen-IX. This is Oxygen-dependent coproporphyrinogen-III oxidase from Escherichia fergusonii (strain ATCC 35469 / DSM 13698 / CCUG 18766 / IAM 14443 / JCM 21226 / LMG 7866 / NBRC 102419 / NCTC 12128 / CDC 0568-73).